A 221-amino-acid polypeptide reads, in one-letter code: Adenylate kinase (221 aa).

An ATP-binding site is contributed by 10–15 (GAGKGT). The NMP stretch occupies residues 30–59 (STGDIFRQNLRDNTELGKLAKEYMDKGLLV). Residues threonine 31, arginine 36, 57–59 (LLV), 85–88 (GYPR), and glutamine 92 contribute to the AMP site. The tract at residues 126–163 (GRRVCPVCGATYHIKTSPPKVDNVCDKCGSELIQRSDD) is LID. Arginine 127 is a binding site for ATP. Positions 130 and 133 each coordinate Zn(2+). Residue 136–137 (TY) coordinates ATP. Zn(2+) contacts are provided by cysteine 150 and cysteine 153. Residues arginine 160 and arginine 171 each contribute to the AMP site. Residue lysine 199 participates in ATP binding.

The protein belongs to the adenylate kinase family. In terms of assembly, monomer.

It is found in the cytoplasm. The catalysed reaction is AMP + ATP = 2 ADP. The protein operates within purine metabolism; AMP biosynthesis via salvage pathway; AMP from ADP: step 1/1. In terms of biological role, catalyzes the reversible transfer of the terminal phosphate group between ATP and AMP. Plays an important role in cellular energy homeostasis and in adenine nucleotide metabolism. This chain is Adenylate kinase, found in Caldanaerobacter subterraneus subsp. tengcongensis (strain DSM 15242 / JCM 11007 / NBRC 100824 / MB4) (Thermoanaerobacter tengcongensis).